A 62-amino-acid polypeptide reads, in one-letter code: Bacteriocin lactacin-F subunit LafX (62 aa).

The propeptide occupies 1–14; that stretch reads MKLNDKELSKIVGG.

This sequence belongs to the bacteriocin class IIB family. In terms of assembly, this bacteriocin depends upon the complementation of two peptides for activity: LafA and LafX. Associated with a 180 kDa bacteriocin complex.

Functionally, heat stable bacteriocin active against Enterococcus faecalis and other Lactobacilli. The polypeptide is Bacteriocin lactacin-F subunit LafX (lafX) (Lactobacillus johnsonii (strain CNCM I-12250 / La1 / NCC 533)).